The following is an 89-amino-acid chain: MAKKSKIAKYQKQLQLIEQYADLRRDLKAKGDYESLRKLPRDSNPNRLKNRDKIDGRPHAYMRKFGVSRINFRDLAHKGQLPGVTKASW.

The disordered stretch occupies residues 34–54 (ESLRKLPRDSNPNRLKNRDKI).

This sequence belongs to the universal ribosomal protein uS14 family. In terms of assembly, part of the 30S ribosomal subunit. Contacts proteins S3 and S10.

Functionally, binds 16S rRNA, required for the assembly of 30S particles and may also be responsible for determining the conformation of the 16S rRNA at the A site. This Streptococcus pyogenes serotype M1 protein is Small ribosomal subunit protein uS14A.